The primary structure comprises 358 residues: DNA replication and repair protein RecF (358 aa).

Residue 30 to 37 coordinates ATP; that stretch reads GNNGSGKT.

This sequence belongs to the RecF family.

The protein resides in the cytoplasm. Its function is as follows. The RecF protein is involved in DNA metabolism; it is required for DNA replication and normal SOS inducibility. RecF binds preferentially to single-stranded, linear DNA. It also seems to bind ATP. In Histophilus somni (strain 2336) (Haemophilus somnus), this protein is DNA replication and repair protein RecF.